A 350-amino-acid polypeptide reads, in one-letter code: Biotin synthase (350 aa).

One can recognise a Radical SAM core domain in the interval 41–268 (NEVQISRLLS…LSRVRLSAGR (228 aa)). Residues cysteine 56, cysteine 60, and cysteine 63 each contribute to the [4Fe-4S] cluster site. [2Fe-2S] cluster-binding residues include cysteine 100, cysteine 131, cysteine 191, and arginine 263.

It belongs to the radical SAM superfamily. Biotin synthase family. In terms of assembly, homodimer. [4Fe-4S] cluster serves as cofactor. It depends on [2Fe-2S] cluster as a cofactor.

It carries out the reaction (4R,5S)-dethiobiotin + (sulfur carrier)-SH + 2 reduced [2Fe-2S]-[ferredoxin] + 2 S-adenosyl-L-methionine = (sulfur carrier)-H + biotin + 2 5'-deoxyadenosine + 2 L-methionine + 2 oxidized [2Fe-2S]-[ferredoxin]. The protein operates within cofactor biosynthesis; biotin biosynthesis; biotin from 7,8-diaminononanoate: step 2/2. Functionally, catalyzes the conversion of dethiobiotin (DTB) to biotin by the insertion of a sulfur atom into dethiobiotin via a radical-based mechanism. The polypeptide is Biotin synthase (Shewanella oneidensis (strain ATCC 700550 / JCM 31522 / CIP 106686 / LMG 19005 / NCIMB 14063 / MR-1)).